We begin with the raw amino-acid sequence, 475 residues long: TOM1-like protein 1 (475 aa).

The VHS domain occupies 22–154 (ATFAGVQTED…DLLKKGVQFP (133 aa)). The segment at 155-175 (PLDGEPETKQEAGQISPSRPT) is disordered. Residues 165–175 (EAGQISPSRPT) are compositionally biased toward polar residues. S170 is subject to Phosphoserine. A GAT domain is found at 199–287 (EQIGKLHSEL…AILGYERFTR (89 aa)). Residues 296–317 (KRNPTEANQTSSEPSAPSCDLL) form a disordered region. Residues 300–310 (TEANQTSSEPS) show a composition bias toward polar residues. Phosphoserine is present on S313. The tract at residues 392–395 (YDNF) is interaction with GRB2. An SH3-binding motif is present at residues 421–425 (LPPLP). Residues 442 to 445 (YEVM) are interaction with PIK3R1. Residue Y458 is modified to Phosphotyrosine. An SH2-binding motif is present at residues 458 to 461 (YEEI).

This sequence belongs to the TOM1 family. In terms of assembly, interacts with the SH2 and SH3 domains of FYN when phosphorylated. Also interacts with GRB2 and PIK3R1 when phosphorylated. Interacts with LYN. Post-translationally, phosphorylated on tyrosines by FYN and LYN.

The protein resides in the golgi apparatus. The protein localises to the golgi stack. It localises to the endosome membrane. Its subcellular location is the cytoplasm. It is found in the membrane. Probable adapter protein involved in signaling pathways. Interacts with the SH2 and SH3 domains of various signaling proteins when it is phosphorylated. May promote FYN activation, possibly by disrupting intramolecular SH3-dependent interactions. The protein is TOM1-like protein 1 (Tom1l1) of Rattus norvegicus (Rat).